We begin with the raw amino-acid sequence, 163 residues long: Periplasmic nitrate reductase, electron transfer subunit (163 aa).

Residues 1 to 32 form the signal peptide; sequence MRSQDPSRRLSRRLWTLFALALCLVTGTVALA. The heme c site is built by H76, C90, C93, H94, H111, C130, C133, and H134.

Belongs to the NapB family. In terms of assembly, component of the periplasmic nitrate reductase NapAB complex composed of NapA and NapB. Post-translationally, binds 2 heme C groups per subunit.

The protein localises to the periplasm. Electron transfer subunit of the periplasmic nitrate reductase complex NapAB. Receives electrons from the membrane-anchored tetraheme c-type NapC protein and transfers these to NapA subunit, thus allowing electron flow between membrane and periplasm. Essential for periplasmic nitrate reduction with nitrate as the terminal electron acceptor. In Neorhizobium galegae (Rhizobium galegae), this protein is Periplasmic nitrate reductase, electron transfer subunit.